The chain runs to 673 residues: DNA ligase (673 aa).

Residues 34–38, 83–84, and glutamate 116 each bind NAD(+); these read DAEYD and SL. Catalysis depends on lysine 118, which acts as the N6-AMP-lysine intermediate. Residues arginine 139, glutamate 176, lysine 293, and lysine 317 each contribute to the NAD(+) site. Zn(2+) is bound by residues cysteine 411, cysteine 414, cysteine 429, and cysteine 435. The BRCT domain maps to 595–673; that stretch reads NQQNPFFGKT…EDEFLKWVNS (79 aa).

This sequence belongs to the NAD-dependent DNA ligase family. LigA subfamily. The cofactor is Mg(2+). Mn(2+) is required as a cofactor.

The enzyme catalyses NAD(+) + (deoxyribonucleotide)n-3'-hydroxyl + 5'-phospho-(deoxyribonucleotide)m = (deoxyribonucleotide)n+m + AMP + beta-nicotinamide D-nucleotide.. In terms of biological role, DNA ligase that catalyzes the formation of phosphodiester linkages between 5'-phosphoryl and 3'-hydroxyl groups in double-stranded DNA using NAD as a coenzyme and as the energy source for the reaction. It is essential for DNA replication and repair of damaged DNA. In Legionella pneumophila (strain Paris), this protein is DNA ligase.